The sequence spans 278 residues: Diaminopimelate epimerase (278 aa).

3 residues coordinate substrate: Asn13, Gln46, and Asn67. The Proton donor role is filled by Cys76. Residues 77–78 (GN), Asn160, Asn193, and 211–212 (ER) contribute to the substrate site. Cys220 serves as the catalytic Proton acceptor. A substrate-binding site is contributed by 221-222 (GT).

The protein belongs to the diaminopimelate epimerase family. Homodimer.

The protein localises to the cytoplasm. It carries out the reaction (2S,6S)-2,6-diaminopimelate = meso-2,6-diaminopimelate. The protein operates within amino-acid biosynthesis; L-lysine biosynthesis via DAP pathway; DL-2,6-diaminopimelate from LL-2,6-diaminopimelate: step 1/1. In terms of biological role, catalyzes the stereoinversion of LL-2,6-diaminopimelate (L,L-DAP) to meso-diaminopimelate (meso-DAP), a precursor of L-lysine and an essential component of the bacterial peptidoglycan. The polypeptide is Diaminopimelate epimerase (Thioalkalivibrio sulfidiphilus (strain HL-EbGR7)).